Reading from the N-terminus, the 518-residue chain is Putative malate dehydrogenase 1B (518 aa).

This sequence belongs to the LDH/MDH superfamily. MDH type 2 family.

This chain is Putative malate dehydrogenase 1B (MDH1B), found in Homo sapiens (Human).